Here is a 56-residue protein sequence, read N- to C-terminus: Small ribosomal subunit protein uS14 (56 aa).

4 residues coordinate Zn(2+): cysteine 21, cysteine 24, cysteine 39, and cysteine 42.

The protein belongs to the universal ribosomal protein uS14 family. Zinc-binding uS14 subfamily. As to quaternary structure, part of the 30S ribosomal subunit. Zn(2+) serves as cofactor.

Its function is as follows. Binds 16S rRNA, required for the assembly of 30S particles. In Thermococcus kodakarensis (strain ATCC BAA-918 / JCM 12380 / KOD1) (Pyrococcus kodakaraensis (strain KOD1)), this protein is Small ribosomal subunit protein uS14.